Consider the following 438-residue polypeptide: 23S rRNA (uracil(1939)-C(5))-methyltransferase RlmD (438 aa).

Residues R9–K68 enclose the TRAM domain. Residues C81, C87, C90, and C168 each coordinate [4Fe-4S] cluster. Q272, F301, N306, E322, N349, and D370 together coordinate S-adenosyl-L-methionine. Residue C396 is the Nucleophile of the active site.

Belongs to the class I-like SAM-binding methyltransferase superfamily. RNA M5U methyltransferase family. RlmD subfamily.

The enzyme catalyses uridine(1939) in 23S rRNA + S-adenosyl-L-methionine = 5-methyluridine(1939) in 23S rRNA + S-adenosyl-L-homocysteine + H(+). In terms of biological role, catalyzes the formation of 5-methyl-uridine at position 1939 (m5U1939) in 23S rRNA. The polypeptide is 23S rRNA (uracil(1939)-C(5))-methyltransferase RlmD (Photorhabdus laumondii subsp. laumondii (strain DSM 15139 / CIP 105565 / TT01) (Photorhabdus luminescens subsp. laumondii)).